The primary structure comprises 282 residues: 4-diphosphocytidyl-2-C-methyl-D-erythritol kinase (282 aa).

Lys12 is a catalytic residue. 95-105 is an ATP binding site; it reads PMGGGIGGGSS. The active site involves Asp137.

This sequence belongs to the GHMP kinase family. IspE subfamily.

It carries out the reaction 4-CDP-2-C-methyl-D-erythritol + ATP = 4-CDP-2-C-methyl-D-erythritol 2-phosphate + ADP + H(+). The protein operates within isoprenoid biosynthesis; isopentenyl diphosphate biosynthesis via DXP pathway; isopentenyl diphosphate from 1-deoxy-D-xylulose 5-phosphate: step 3/6. In terms of biological role, catalyzes the phosphorylation of the position 2 hydroxy group of 4-diphosphocytidyl-2C-methyl-D-erythritol. In Pseudomonas paraeruginosa (strain DSM 24068 / PA7) (Pseudomonas aeruginosa (strain PA7)), this protein is 4-diphosphocytidyl-2-C-methyl-D-erythritol kinase.